We begin with the raw amino-acid sequence, 551 residues long: Chaperonin GroEL (551 aa).

Residues 29-32 (TAGP), Lys50, 86-90 (DGTTT), Gly417, and Asp499 each bind ATP.

This sequence belongs to the chaperonin (HSP60) family. As to quaternary structure, forms a cylinder of 14 subunits composed of two heptameric rings stacked back-to-back. Interacts with the co-chaperonin GroES.

It localises to the cytoplasm. The enzyme catalyses ATP + H2O + a folded polypeptide = ADP + phosphate + an unfolded polypeptide.. Together with its co-chaperonin GroES, plays an essential role in assisting protein folding. The GroEL-GroES system forms a nano-cage that allows encapsulation of the non-native substrate proteins and provides a physical environment optimized to promote and accelerate protein folding. This is Chaperonin GroEL from Ehrlichia ruminantium (strain Gardel).